Here is a 522-residue protein sequence, read N- to C-terminus: Kelch domain-containing protein 4 (522 aa).

The segment covering 1-10 (MGKKGKKEKK) has biased composition (basic residues). The disordered stretch occupies residues 1-33 (MGKKGKKEKKGRGAEKTAAKMEKKVSKRSRKEE). Basic and acidic residues predominate over residues 11-24 (GRGAEKTAAKMEKK). Kelch repeat units lie at residues 77–129 (ELIL…VVPQ), 133–187 (QLWV…AWKR), 188–241 (QLIL…VTPQ), 243–289 (GIII…MNPS), and 308–361 (QTLF…RRGR). Disordered regions lie at residues 346 to 378 (QLKG…GAGT), 402 to 432 (LAAP…PCPR), and 481 to 522 (DPET…GAED). Phosphoserine occurs at positions 413 and 418. A Kelch 6 repeat occupies 443 to 494 (VLYVYGGMFEAGDRQVTLSDLHCLDLHRMEAWKALVEMDPETQEWLEETDSE).

The protein is Kelch domain-containing protein 4 (KLHDC4) of Pongo abelii (Sumatran orangutan).